A 98-amino-acid polypeptide reads, in one-letter code: Defensin-like protein 192 (98 aa).

An N-terminal signal peptide occupies residues 1–27; it reads MATKSVSTFAIFFILVLAIFETPEIEA. Disulfide bonds link cysteine 32–cysteine 86, cysteine 45–cysteine 69, cysteine 54–cysteine 81, and cysteine 58–cysteine 83.

This sequence belongs to the DEFL family. Protease inhibitor I18 (RTI/MTI-2) subfamily.

It is found in the secreted. In Arabidopsis thaliana (Mouse-ear cress), this protein is Defensin-like protein 192 (ATTI7).